The chain runs to 197 residues: Thymidine kinase (197 aa).

ATP contacts are provided by residues 15 to 22 (GPMFAGKT) and 93 to 96 (DEVQ). The active-site Proton acceptor is E94. Zn(2+)-binding residues include C150, C153, C188, and H191.

The protein belongs to the thymidine kinase family. Homotetramer.

It is found in the cytoplasm. It carries out the reaction thymidine + ATP = dTMP + ADP + H(+). The chain is Thymidine kinase from Thermococcus kodakarensis (strain ATCC BAA-918 / JCM 12380 / KOD1) (Pyrococcus kodakaraensis (strain KOD1)).